We begin with the raw amino-acid sequence, 150 residues long: Large ribosomal subunit protein bL9 (150 aa).

The protein belongs to the bacterial ribosomal protein bL9 family.

Functionally, binds to the 23S rRNA. This chain is Large ribosomal subunit protein bL9, found in Serratia proteamaculans (strain 568).